The sequence spans 342 residues: Holliday junction branch migration complex subunit RuvB (342 aa).

The tract at residues 1–179 (MTNILSPEKS…FGIPMRLNFY (179 aa)) is large ATPase domain (RuvB-L). ATP contacts are provided by residues Ile-18, Arg-19, Gly-60, Lys-63, Thr-64, Thr-65, 126 to 128 (EDF), Arg-169, Tyr-179, and Arg-216. Thr-64 serves as a coordination point for Mg(2+). Residues 180–250 (NTEELKKVLN…ISDFGLKRLE (71 aa)) are small ATPAse domain (RuvB-S). A head domain (RuvB-H) region spans residues 253-342 (RIGLDSNDYR…HQFNIFNENE (90 aa)). DNA is bound by residues Arg-289, Arg-308, and Arg-313.

The protein belongs to the RuvB family. As to quaternary structure, homohexamer. Forms an RuvA(8)-RuvB(12)-Holliday junction (HJ) complex. HJ DNA is sandwiched between 2 RuvA tetramers; dsDNA enters through RuvA and exits via RuvB. An RuvB hexamer assembles on each DNA strand where it exits the tetramer. Each RuvB hexamer is contacted by two RuvA subunits (via domain III) on 2 adjacent RuvB subunits; this complex drives branch migration. In the full resolvosome a probable DNA-RuvA(4)-RuvB(12)-RuvC(2) complex forms which resolves the HJ.

Its subcellular location is the cytoplasm. It catalyses the reaction ATP + H2O = ADP + phosphate + H(+). Its function is as follows. The RuvA-RuvB-RuvC complex processes Holliday junction (HJ) DNA during genetic recombination and DNA repair, while the RuvA-RuvB complex plays an important role in the rescue of blocked DNA replication forks via replication fork reversal (RFR). RuvA specifically binds to HJ cruciform DNA, conferring on it an open structure. The RuvB hexamer acts as an ATP-dependent pump, pulling dsDNA into and through the RuvAB complex. RuvB forms 2 homohexamers on either side of HJ DNA bound by 1 or 2 RuvA tetramers; 4 subunits per hexamer contact DNA at a time. Coordinated motions by a converter formed by DNA-disengaged RuvB subunits stimulates ATP hydrolysis and nucleotide exchange. Immobilization of the converter enables RuvB to convert the ATP-contained energy into a lever motion, pulling 2 nucleotides of DNA out of the RuvA tetramer per ATP hydrolyzed, thus driving DNA branch migration. The RuvB motors rotate together with the DNA substrate, which together with the progressing nucleotide cycle form the mechanistic basis for DNA recombination by continuous HJ branch migration. Branch migration allows RuvC to scan DNA until it finds its consensus sequence, where it cleaves and resolves cruciform DNA. The polypeptide is Holliday junction branch migration complex subunit RuvB (Rickettsia peacockii (strain Rustic)).